We begin with the raw amino-acid sequence, 440 residues long: Argininosuccinate lyase (440 aa).

The protein belongs to the lyase 1 family. Argininosuccinate lyase subfamily.

The protein localises to the cytoplasm. It catalyses the reaction 2-(N(omega)-L-arginino)succinate = fumarate + L-arginine. It participates in amino-acid biosynthesis; L-arginine biosynthesis; L-arginine from L-ornithine and carbamoyl phosphate: step 3/3. This chain is Argininosuccinate lyase, found in Clostridium botulinum (strain 657 / Type Ba4).